A 500-amino-acid chain; its full sequence is LEM protein 2 (500 aa).

One can recognise an LEM domain in the interval 1-45; sequence MVDVEKMSDAELRAELNVRGANVGPVTGTTRSLYEKKLKKLLSGG. Topologically, residues 1 to 325 are nuclear; sequence MVDVEKMSDA…VKQTNIFNEA (325 aa). A disordered region spans residues 39-202; it reads KKLLSGGAKT…RRITSVPGLI (164 aa). Positions 46–57 are enriched in low complexity; sequence AKTPARPTVAKP. Over residues 58-75 the composition is skewed to pro residues; sequence APKPTPKSAPAPKSPKSP. Over residues 77-89 the composition is skewed to low complexity; the sequence is ARRSIPRAAATAA. A compositionally biased stretch (acidic residues) spans 103–122; it reads EEMSDSDDDMRDDDDDDEEI. 2 stretches are compositionally biased toward low complexity: residues 130–141 and 168–197; these read SSFRSANSTASS and NTPR…RITS. The helical transmembrane segment at 326–346 threads the bilayer; the sequence is IYFALYVILILFVVLGIAYAL. Over 347–378 the chain is Perinuclear space; that stretch reads TTTHRPKTADFSGYWGVLKAAGRDSLNFFYNY. A helical membrane pass occupies residues 379–399; sequence AILPVVSLGIFVVLGAGIYFG. Residues 400 to 500 are Nuclear-facing; sequence HRKYKEAKEQ…WIGNQSQKRW (101 aa).

In terms of assembly, interacts with lmn-1. Interacts (via LEM domain and the C-terminal nuclear domain) with baf-1. Ubiquitous. High expression in germline and intestine.

It localises to the nucleus inner membrane. It is found in the nucleus envelope. Its subcellular location is the chromosome. Functionally, nuclear lamina-associated inner nuclear membrane protein that is involved in cell division, nuclear structure organization, maintenance of nuclear envelope integrity and nuclear envelope reformation after mitosis. In interphase cells, plays a role in anchoring and spatial arrangement of chromosome arms at the nuclear periphery, forming so-called lem-2 subdomains. Both arms of autosomes but only the left arm of the X chromosome are anchored in lem-2 subdomains; sequences bound by lem-2 are mainly repetitive chromosome sequences and inactive genes. Involved in chromosome segregation and cell division, probably via its interaction with the nuclear intermediate filament protein lmn-1, the main component of nuclear lamina. Required to organize the distribution of lmn-1, nuclear pore complexes (NPCs) and chromatin in mitotically active cells. Involved in the nuclear positioning and efficient anchoring of microtubule-organizing centers (MTOCs) to the nuclear envelope during mitosis as well as on maintaining correct nuclear morphology. Contributes to closure of nuclear envelope (NE) holes and prevents excess nuclear membranes after meiosis and mitosis. Together with emr-1, plays a role in baf-1 enrichment at the nuclear envelope in anaphase. Together with emr-1, involved in muscle cell attachment to hypodermal cells, as well as muscle cell location and sarcomere organization. May play a role in radiation-induced DNA damage repair response. This Caenorhabditis elegans protein is LEM protein 2 (lem-2).